A 142-amino-acid chain; its full sequence is Neuritin (142 aa).

Positions 1 to 27 (MGLTLSGRYISLFLAVQIAYLLQAVRA) are cleaved as a signal peptide. Alanine 112 carries GPI-anchor amidated alanine lipidation. Positions 113–142 (GGNGAIRSSVPFGVTLLITALSALVTWMQF) are cleaved as a propeptide — removed in mature form.

It belongs to the neuritin family.

The protein resides in the cell membrane. It localises to the synapse. Functionally, modulates postsynaptic dendritic arbor elaboration and synaptic maturation. The protein is Neuritin (nrn1) of Danio rerio (Zebrafish).